Reading from the N-terminus, the 370-residue chain is GTPase Obg (370 aa).

The Obg domain occupies 1–159; the sequence is MKFIDEARIE…RMLRLELKVL (159 aa). The segment at 127–146 is disordered; it reads NLHFKSSTNRAPRQKTDGKP. The OBG-type G domain maps to 160–334; it reads ADVGLLGMPN…LCYAIYDYLA (175 aa). GTP-binding positions include 166–173, 191–195, 213–216, 284–287, and 315–317; these read GMPNAGKS, FTTLA, DIPG, NKLD, and SAL. Residues Ser173 and Thr193 each coordinate Mg(2+). The tract at residues 350-370 is disordered; it reads ADVRFRDAPPSDGGATSGGDA.

The protein belongs to the TRAFAC class OBG-HflX-like GTPase superfamily. OBG GTPase family. Monomer. Requires Mg(2+) as cofactor.

Its subcellular location is the cytoplasm. In terms of biological role, an essential GTPase which binds GTP, GDP and possibly (p)ppGpp with moderate affinity, with high nucleotide exchange rates and a fairly low GTP hydrolysis rate. Plays a role in control of the cell cycle, stress response, ribosome biogenesis and in those bacteria that undergo differentiation, in morphogenesis control. This chain is GTPase Obg, found in Burkholderia vietnamiensis (strain G4 / LMG 22486) (Burkholderia cepacia (strain R1808)).